We begin with the raw amino-acid sequence, 442 residues long: Urokinase-type plasminogen activator (442 aa).

The first 20 residues, 1–20, serve as a signal peptide directing secretion; the sequence is MRVLRACLSLCVLVVSDSKG. An EGF-like domain is found at 29–65; the sequence is GASNCGCLNGGKCVSYKYFSNIQRCSCPKKFQGEHCE. 12 cysteine pairs are disulfide-bonded: cysteine 33–cysteine 41, cysteine 35–cysteine 53, cysteine 55–cysteine 64, cysteine 72–cysteine 153, cysteine 93–cysteine 135, cysteine 124–cysteine 148, cysteine 179–cysteine 310, cysteine 220–cysteine 236, cysteine 228–cysteine 299, cysteine 324–cysteine 393, cysteine 356–cysteine 372, and cysteine 383–cysteine 411. The segment at 36–59 is binds urokinase plasminogen activator surface receptor; the sequence is LNGGKCVSYKYFSNIQRCSCPKKF. Positions 72 to 153 constitute a Kringle domain; the sequence is CFEGNGHSYR…LVQECMVPNC (82 aa). Residue asparagine 152 is glycosylated (N-linked (GlcNAc...) asparagine). Positions 154–189 are connecting peptide; the sequence is SGGESHRPAYDGKNPFSTPEKVEFQCGQKALRPRFK. Positions 190–435 constitute a Peptidase S1 domain; the sequence is IVGGKSTTIE…FLTWIHTHVG (246 aa). Residues histidine 235 and aspartate 286 each act as charge relay system in the active site. The Charge relay system role is filled by serine 387.

It belongs to the peptidase S1 family. As to quaternary structure, found in high and low molecular mass forms. Each consists of two chains, A and B. The high molecular mass form contains a long chain A which is cleaved to yield a short chain A. Forms heterodimer with SERPINA5. Binds LRP1B; binding is followed by internalization and degradation. Interacts with MRC2. Interacts with PLAUR. In complex with SERPINE1, interacts with PLAUR/uPAR. Interacts with SORL1 and LRP1, either alone or in complex with SERPINE1; these interactions are abolished in the presence of LRPAP1/RAP. The ternary complex composed of PLAUR-PLAU-PAI1 also interacts with SORLA. Post-translationally, produced as an inactive single-chain protein (pro-uPA or sc-uPA), is processed into the active disulfide-linked two-chain form of PLAU/uPA by a proteolytic event mediated, at least, by TMPRSS4.

The protein localises to the secreted. It catalyses the reaction Specific cleavage of Arg-|-Val bond in plasminogen to form plasmin.. Its activity is regulated as follows. Inhibited by SERPINA5. Inhibited by SERPINE1. Specifically cleaves the zymogen plasminogen to form the active enzyme plasmin. In Sus scrofa (Pig), this protein is Urokinase-type plasminogen activator (PLAU).